The chain runs to 266 residues: Undecaprenyl-diphosphatase (266 aa).

Transmembrane regions (helical) follow at residues 1-21, 39-59, 87-107, 111-131, 150-172, 187-207, 218-238, and 244-264; these read MTLT…FLPI, QGLA…MIYF, WWVI…KAFI, ARSA…LWYA, LIVG…ITMT, FSFL…TLDL, ALIV…YLFL, and IGML…LLFV.

It belongs to the UppP family.

It localises to the cell inner membrane. It carries out the reaction di-trans,octa-cis-undecaprenyl diphosphate + H2O = di-trans,octa-cis-undecaprenyl phosphate + phosphate + H(+). Catalyzes the dephosphorylation of undecaprenyl diphosphate (UPP). Confers resistance to bacitracin. The chain is Undecaprenyl-diphosphatase from Pseudoalteromonas atlantica (strain T6c / ATCC BAA-1087).